A 541-amino-acid polypeptide reads, in one-letter code: MAIMPYIRQGTVINALVILFSFWAFLSLIRVIRRRSSTTPLKGPPSESFIFGLRQIIHKSEDSDALYEQWADKYGSVYQVSEPMGSKRVVLCDPKAILHLYSKDTFDFVQTEINRLFLGKYFGRGILWAEGESHRRQRKALTPAFSNVAIRNITPVFFDSAYKTKAAWDATFESNPTKERIIIEVQTWMNHISLDSIGIAGFSHDFGSIQGKPSAVLDVFDSFSNVQPDATTTLMFTLAATFPIMLNIPNNRNALFTKLHQTILEISDELLESTRKEEEGKAGGGRGDAKSIIGSLIKAESANSHLRISQEEVIAQMNVLLLAGYETTSVSLTWALIELSRHPDVQQKLRDELSRFAATDPTWEELTNGLPYLDAVVHEILRLHAPLDETIRVAANDDVIPLGTPLQTASGNIVDRISIGKGTTVSIPTRCMNRLTGLWGDNAKEFVPDRWLNDEKDLLKANEIQGYRHLLTFIDGPRTCLGKGFAIAEFKAVLSVLIRHYTFEFPDGPETKVVGHRSIMERPKVAGQDGAKVPLLVRRVE.

The chain crosses the membrane as a helical span at residues Val12 to Ile32. Residue Cys480 coordinates heme.

The protein belongs to the cytochrome P450 family. Requires heme as cofactor.

The protein localises to the membrane. It participates in secondary metabolite biosynthesis; terpenoid biosynthesis. Its function is as follows. Cytochrome P450 monooxygenase; part of the gene cluster that mediates the biosynthesis of clavilactone A, a meroterpenoid that features a unique benzo-fused ten-membered carbocyclic ring unit with an alpha,beta-epoxy-gamma-lactone moiety, forming an intriguing 10/5/3 tricyclic nested skeleton. Cytochrome P450 monooxygenases claO, claP, claQ, claU, and claW are close orthologs, suggesting that a redundant function or pseudogenes are present in the cla cluster. These monoxygenases are not involved in clavilactone A biosynthesis nor its modification. ClaR, ClaS and ClaT are sufficient to produce clavilactone A. The biosynthesis begins with the prenyltransferase claS that transfers geranyl pyrophosphate (GPP) to hydroquinone to produces geranylhydroquinone. The cytochrome P450 monooxygenase claR then catalyzes the diradical coupling reaction between the intramolecular hydroquinone and allyl moieties to form the benzo-fused ten-membered carbocyclic ring unit of wigantol. Finally the cytochrome P450 monooxygenase claT exquisitely and stereoselectively assembles the alpha,beta-epoxy-gamma-lactone moiety, producing clavilactone A via arnebinol A. This chain is Cytochrome P450 monooxygenase claW, found in Ampulloclitocybe clavipes (Club foot).